We begin with the raw amino-acid sequence, 804 residues long: Probable copper-exporting P-type ATPase (804 aa).

At 1–101 the chain is on the cytoplasmic side; the sequence is MVKDTYISSA…VEHLSRMKRK (101 aa). In terms of domain architecture, HMA 1 spans 16 to 82; that stretch reads MERTVRVTGM…VIEDLGYGVV (67 aa). The Cu(+) site is built by cysteine 27 and cysteine 30. Residues 102–122 traverse the membrane as a helical segment; it reads LYVAAFAGVLLLFLAHFISLP. The Extracellular segment spans residues 123–128; the sequence is YEDFVQ. Residues 129–149 form a helical membrane-spanning segment; the sequence is LLIALPAIFYSGSSIFKAAFS. At 150–159 the chain is on the cytoplasmic side; sequence ALRRRTLNMD. A helical transmembrane segment spans residues 160-180; sequence VMYSMGVGAAFLASVLSTAGV. Residues 181 to 186 are Extracellular-facing; it reads LPREYS. A helical transmembrane segment spans residues 187 to 204; that stretch reads FYETSVLLLAFLLLGRTL. The Cytoplasmic segment spans residues 205–339; that stretch reads EARAKSRTGE…PIQRLADKVV (135 aa). The chain crosses the membrane as a helical span at residues 340-360; it reads AYFIPTVLLVAISAFIYWYFI. Residues 361 to 364 are Extracellular-facing; it reads AHAP. A helical transmembrane segment spans residues 365–385; it reads LLFAFTTLIAVLVVACPCAFG. Residues 386–680 are Cytoplasmic-facing; that stretch reads LATPTALTVG…KIKQNIFWAL (295 aa). Aspartate 424 (4-aspartylphosphate intermediate) is an active-site residue. ATP contacts are provided by residues 457-462 and 490-501; these read ERRSEH and GEGVVADGILVG. Aspartate 618 and aspartate 622 together coordinate Mg(2+). The chain crosses the membrane as a helical span at residues 681 to 701; it reads IYNVILIPAAAGLLYPIFGVV. Residues 702–704 lie on the Extracellular side of the membrane; sequence FRP. Residues 705–725 traverse the membrane as a helical segment; it reads EFAGLAMAMSSVSVVANSLLL. The Cytoplasmic segment spans residues 726-804; it reads RNYVPPIRRG…AAGYQAKLRS (79 aa). Residues 740 to 801 enclose the HMA 2 domain; that stretch reads EKIVLELSGL…AVEAAGYQAK (62 aa). Residues cysteine 751 and cysteine 754 each coordinate Cu(+).

The protein belongs to the cation transport ATPase (P-type) (TC 3.A.3) family. Type IB subfamily. Interacts with CopZ probably in the CopZ Cu(+)-bound form.

Its subcellular location is the cell membrane. The catalysed reaction is Cu(+)(in) + ATP + H2O = Cu(+)(out) + ADP + phosphate + H(+). Its activity is regulated as follows. Activated by Cu(+) and Ag(+) and inhibited by vanadate. Activated by CopZ in its Cu(+)-bound form. Probably involved in copper and silver export. This is Probable copper-exporting P-type ATPase (copA) from Archaeoglobus fulgidus (strain ATCC 49558 / DSM 4304 / JCM 9628 / NBRC 100126 / VC-16).